We begin with the raw amino-acid sequence, 164 residues long: V-type proton ATPase 16 kDa proteolipid subunit (164 aa).

The Lumenal segment spans residues 1-10 (MSDLCPPTAP). The chain crosses the membrane as a helical span at residues 11-31 (FFGFMGAAVALIFANLGAAYG). Topologically, residues 32 to 53 (TAKSGVGVSSMGVMKPDLVMKS) are cytoplasmic. Residues 54 to 74 (IIPVVMAGVLGIYGLIIAVII) traverse the membrane as a helical segment. The Lumenal portion of the chain corresponds to 75-96 (GNGVKGPEGGKPQYSSFTGFAH). Residues 97–118 (LAAGLACGLSGMAAGIAIGIVG) form a helical membrane-spanning segment. Residues 119 to 130 (DAGVRASAQQAK) lie on the Cytoplasmic side of the membrane. Residues 131-155 (LYVGMVLILIFAEALGLYGLIVGLI) form a helical membrane-spanning segment. The Lumenal segment spans residues 156 to 164 (LTSKEAPCS).

This sequence belongs to the V-ATPase proteolipid subunit family. As to quaternary structure, V-ATPase is a heteromultimeric enzyme composed of a peripheral catalytic V1 complex (main components: subunits A, B, C, D, E, and F) attached to an integral membrane V0 proton pore complex (main component: the proteolipid protein; which is present as a hexamer that forms the proton-conducting pore).

Its subcellular location is the vacuole membrane. In terms of biological role, proton-conducting pore forming subunit of the membrane integral V0 complex of vacuolar ATPase. V-ATPase is responsible for acidifying a variety of intracellular compartments in eukaryotic cells. This chain is V-type proton ATPase 16 kDa proteolipid subunit (VAP), found in Chrysotila carterae (Marine alga).